Reading from the N-terminus, the 83-residue chain is Cytochrome b559 subunit alpha (83 aa).

A helical transmembrane segment spans residues 21 to 35 (VIHSITIPSLFIAGW). Histidine 23 serves as a coordination point for heme.

The protein belongs to the PsbE/PsbF family. Heterodimer of an alpha subunit and a beta subunit. PSII is composed of 1 copy each of membrane proteins PsbA, PsbB, PsbC, PsbD, PsbE, PsbF, PsbH, PsbI, PsbJ, PsbK, PsbL, PsbM, PsbT, PsbX, PsbY, PsbZ, Psb30/Ycf12, at least 3 peripheral proteins of the oxygen-evolving complex and a large number of cofactors. It forms dimeric complexes. Heme b serves as cofactor.

The protein resides in the plastid. It is found in the chloroplast thylakoid membrane. Its function is as follows. This b-type cytochrome is tightly associated with the reaction center of photosystem II (PSII). PSII is a light-driven water:plastoquinone oxidoreductase that uses light energy to abstract electrons from H(2)O, generating O(2) and a proton gradient subsequently used for ATP formation. It consists of a core antenna complex that captures photons, and an electron transfer chain that converts photonic excitation into a charge separation. The polypeptide is Cytochrome b559 subunit alpha (Chaetosphaeridium globosum (Charophycean green alga)).